We begin with the raw amino-acid sequence, 560 residues long: Leucine-rich repeat and IQ domain-containing protein 4 (560 aa).

The tract at residues methionine 1–proline 20 is disordered. 20 LRR repeats span residues valine 23 to phenylalanine 47, threonine 48 to leucine 70, asparagine 72 to serine 95, glutamate 97 to phenylalanine 116, leucine 117 to asparagine 140, leucine 141 to glutamine 164, lysine 166 to leucine 187, tyrosine 188 to leucine 210, glycine 212 to cysteine 233, serine 234 to leucine 256, lysine 258 to serine 281, histidine 283 to cysteine 301, leucine 302 to leucine 325, lysine 326 to leucine 348, lysine 350 to leucine 371, leucine 374 to leucine 397, glutamine 398 to asparagine 422, glutamate 424 to alanine 443, glutamine 444 to leucine 466, and asparagine 468 to glutamate 489. In terms of domain architecture, IQ spans arginine 504 to proline 533. The interval glutamate 529–lysine 560 is disordered. Residues proline 533 to lysine 560 show a composition bias toward basic residues.

This is Leucine-rich repeat and IQ domain-containing protein 4 (LRRIQ4) from Homo sapiens (Human).